We begin with the raw amino-acid sequence, 474 residues long: 3-isopropylmalate dehydratase large subunit (474 aa).

[4Fe-4S] cluster-binding residues include Cys-355, Cys-415, and Cys-418.

The protein belongs to the aconitase/IPM isomerase family. LeuC type 1 subfamily. Heterodimer of LeuC and LeuD. The cofactor is [4Fe-4S] cluster.

It carries out the reaction (2R,3S)-3-isopropylmalate = (2S)-2-isopropylmalate. It participates in amino-acid biosynthesis; L-leucine biosynthesis; L-leucine from 3-methyl-2-oxobutanoate: step 2/4. In terms of biological role, catalyzes the isomerization between 2-isopropylmalate and 3-isopropylmalate, via the formation of 2-isopropylmaleate. This Shewanella putrefaciens (strain CN-32 / ATCC BAA-453) protein is 3-isopropylmalate dehydratase large subunit.